The following is a 130-amino-acid chain: Protein ApaG (130 aa).

Residues 3–127 (SAMTRSINIL…FSLDSPHAKR (125 aa)) form the ApaG domain.

This Parvibaculum lavamentivorans (strain DS-1 / DSM 13023 / NCIMB 13966) protein is Protein ApaG.